We begin with the raw amino-acid sequence, 307 residues long: Ribosomal RNA small subunit methyltransferase H (307 aa).

S-adenosyl-L-methionine-binding positions include 32–34 (GGH), Asp52, Phe78, Asp99, and Gln106.

It belongs to the methyltransferase superfamily. RsmH family.

It localises to the cytoplasm. It carries out the reaction cytidine(1402) in 16S rRNA + S-adenosyl-L-methionine = N(4)-methylcytidine(1402) in 16S rRNA + S-adenosyl-L-homocysteine + H(+). Functionally, specifically methylates the N4 position of cytidine in position 1402 (C1402) of 16S rRNA. The protein is Ribosomal RNA small subunit methyltransferase H of Acinetobacter baumannii (strain AB0057).